Consider the following 311-residue polypeptide: Serine/threonine-protein phosphatase PP1-1 (311 aa).

The Mn(2+) site is built by Asp-53, His-55, Asp-82, and Asn-114. His-115 functions as the Proton donor in the catalytic mechanism. 2 residues coordinate Mn(2+): His-164 and His-238.

Belongs to the PPP phosphatase family. PP-6 (PP-V) subfamily. As to quaternary structure, inactivated in a complex with phosphatase methylesterase PPE1 (PP2Ai). Interacts with phosphatase 2A activator RRD1, which can reactivate PP2Ai by dissociating the catalytic subunit from the complex. Forms a ternary complex with RRD1-TAP42. Mn(2+) serves as cofactor.

It is found in the cytoplasm. It carries out the reaction O-phospho-L-seryl-[protein] + H2O = L-seryl-[protein] + phosphate. It catalyses the reaction O-phospho-L-threonyl-[protein] + H2O = L-threonyl-[protein] + phosphate. In terms of biological role, involved in the dephosphorylation of the large subunit of RNA polymerase II. Is required in late G1 for normal G1 cyclin expression, bud initiation and expression of certain genes that are periodically expressed during late G1. Associates with the SAP proteins in a cell cycle-dependent manner. In Saccharomyces cerevisiae (strain ATCC 204508 / S288c) (Baker's yeast), this protein is Serine/threonine-protein phosphatase PP1-1 (SIT4).